A 343-amino-acid chain; its full sequence is Endoplasmic reticulum-resident calcium binding protein (343 aa).

The first 26 residues, 1-26, serve as a signal peptide directing secretion; it reads MMKINLYKLLCFICVIFLLHKNVVRS. EF-hand domains lie at 59 to 94, 95 to 130, 135 to 170, 172 to 207, and 210 to 245; these read GAKERIEKLFHLIDKNNDKEITEEELNTWSSFLKNE, IFLKQVQAEMGQIDSDKDGFISLNELNDAFAQNLDA, KHSEGLLKRFQIVDKDKDGKLSINEVGLLIDPMKDE, LKELEINEILEHHDVNKDGKISLDEFKQTRSDESSG, and KDDEMALDDFNFFDANKDGFIDKEEIIKVYFDPAHE. 23 residues coordinate Ca(2+): Asp72, Asn74, Asp76, Glu78, Glu83, Asp108, Asp110, Asp112, Glu119, Asp148, Asp150, Asp152, Lys154, Glu159, Asp185, Asn187, Asp189, Lys191, Glu196, Asp223, Asn225, Asp227, and Glu234. Over residues 313-331 the composition is skewed to acidic residues; sequence EDDDMDADNTEDDKDEADD. Positions 313 to 343 are disordered; the sequence is EDDDMDADNTEDDKDEADDASQQKSPAIDEL.

This sequence belongs to the CREC family.

Its subcellular location is the endoplasmic reticulum. Its function is as follows. Calcium-binding protein. Required for schizont to ring transition. Required for the breakdown of the parasitophorous vacuole membrane during egress. Required for the proteolytic maturation of apical membrane antigen 1 (AMA-1) during egress. Required for the proteolytic maturation of subtilisin-like protease 1 (SUB1) during egress. Required for the proteolytic maturation of plasmepsin X (PMX) during egress. This Plasmodium falciparum (isolate 3D7) protein is Endoplasmic reticulum-resident calcium binding protein.